The sequence spans 119 residues: Protein TraH (119 aa).

The tract at residues 1 to 67 (MSNPNEMTDE…ALDESRRPKA (67 aa)) is disordered. Residues 41–54 (APSAPAEPSHSASP) are compositionally biased toward low complexity.

Functionally, the initiation process of transfer DNA synthesis requires the interaction of at least three plasmid-specific components (TraH, TraI, and TraJ) at the transfer origin resulting in the assembly of a specialized nucleoprotein complex - the relaxosome. The sequence is that of Protein TraH (traH) from Escherichia coli.